We begin with the raw amino-acid sequence, 257 residues long: uncharacterized protein (257 aa).

Residues Met-1–Ala-26 form the signal peptide. The tract at residues Ala-80–Ala-135 is disordered. The segment covering Glu-121–Ser-134 has biased composition (polar residues). An SCP domain is found at Val-141–Phe-254.

This is an uncharacterized protein from Bacillus subtilis (strain 168).